The chain runs to 449 residues: Glucose-6-phosphate isomerase (449 aa).

Thr38 carries the phosphothreonine modification. Catalysis depends on Glu290, which acts as the Proton donor. Catalysis depends on residues His311 and Lys425.

It belongs to the GPI family.

It is found in the cytoplasm. It catalyses the reaction alpha-D-glucose 6-phosphate = beta-D-fructose 6-phosphate. The protein operates within carbohydrate biosynthesis; gluconeogenesis. It functions in the pathway carbohydrate degradation; glycolysis; D-glyceraldehyde 3-phosphate and glycerone phosphate from D-glucose: step 2/4. Its function is as follows. Catalyzes the reversible isomerization of glucose-6-phosphate to fructose-6-phosphate. The sequence is that of Glucose-6-phosphate isomerase from Geobacillus thermodenitrificans (strain NG80-2).